A 396-amino-acid chain; its full sequence is 1-deoxy-D-xylulose 5-phosphate reductoisomerase (396 aa).

NADPH is bound by residues Thr-10, Gly-11, Ser-12, Ile-13, Asn-38, and Asn-123. Lys-124 contributes to the 1-deoxy-D-xylulose 5-phosphate binding site. Glu-125 provides a ligand contact to NADPH. Mn(2+) is bound at residue Asp-149. Ser-150, Glu-151, Ser-185, and His-208 together coordinate 1-deoxy-D-xylulose 5-phosphate. Position 151 (Glu-151) interacts with Mn(2+). Gly-214 contributes to the NADPH binding site. Residues Ser-221, Asn-226, Lys-227, and Glu-230 each coordinate 1-deoxy-D-xylulose 5-phosphate. Glu-230 provides a ligand contact to Mn(2+).

It belongs to the DXR family. The cofactor is Mg(2+). Mn(2+) serves as cofactor.

It carries out the reaction 2-C-methyl-D-erythritol 4-phosphate + NADP(+) = 1-deoxy-D-xylulose 5-phosphate + NADPH + H(+). The protein operates within isoprenoid biosynthesis; isopentenyl diphosphate biosynthesis via DXP pathway; isopentenyl diphosphate from 1-deoxy-D-xylulose 5-phosphate: step 1/6. Catalyzes the NADPH-dependent rearrangement and reduction of 1-deoxy-D-xylulose-5-phosphate (DXP) to 2-C-methyl-D-erythritol 4-phosphate (MEP). The sequence is that of 1-deoxy-D-xylulose 5-phosphate reductoisomerase from Shewanella pealeana (strain ATCC 700345 / ANG-SQ1).